Here is a 383-residue protein sequence, read N- to C-terminus: Cell division protein FtsZ (383 aa).

GTP is bound by residues 20-24 (GGGGN), 107-109 (GTG), Glu138, Arg142, and Asn186.

This sequence belongs to the FtsZ family. As to quaternary structure, homodimer. Polymerizes to form a dynamic ring structure in a strictly GTP-dependent manner. Interacts directly with several other division proteins.

The protein localises to the cytoplasm. Functionally, essential cell division protein that forms a contractile ring structure (Z ring) at the future cell division site. The regulation of the ring assembly controls the timing and the location of cell division. One of the functions of the FtsZ ring is to recruit other cell division proteins to the septum to produce a new cell wall between the dividing cells. Binds GTP and shows GTPase activity. This chain is Cell division protein FtsZ, found in Escherichia coli O157:H7.